A 198-amino-acid chain; its full sequence is Holliday junction resolvase RecU (198 aa).

A disordered region spans residues 1 to 22; it reads MVNYPHKVSSQKRQTSLSQPKN. A compositionally biased stretch (polar residues) spans 11–22; the sequence is QKRQTSLSQPKN. Positions 81, 83, 96, and 115 each coordinate Mg(2+).

The protein belongs to the RecU family. Mg(2+) is required as a cofactor.

It is found in the cytoplasm. It carries out the reaction Endonucleolytic cleavage at a junction such as a reciprocal single-stranded crossover between two homologous DNA duplexes (Holliday junction).. Endonuclease that resolves Holliday junction intermediates in genetic recombination. Cleaves mobile four-strand junctions by introducing symmetrical nicks in paired strands. Promotes annealing of linear ssDNA with homologous dsDNA. Required for DNA repair, homologous recombination and chromosome segregation. This is Holliday junction resolvase RecU from Streptococcus pneumoniae (strain P1031).